Reading from the N-terminus, the 372-residue chain is Homoserine dehydrogenase (372 aa).

Residues V13, G15, V16, and T99 each coordinate NAD(+). NADP(+) contacts are provided by V16 and T99. Positions 16, 99, 100, and 123 each coordinate NADPH. K123 serves as a coordination point for NADP(+). Na(+) contacts are provided by E150, V153, A155, and L157. 2 residues coordinate NADP(+): G216 and E219. L-homoserine-binding residues include E219 and D230. The Proton donor role is filled by K234. NAD(+) is bound at residue G352. G352 is a binding site for NADP(+). Residue G352 coordinates NADPH.

It belongs to the homoserine dehydrogenase family. In terms of assembly, homodimer. The cofactor is a metal cation.

The enzyme catalyses L-homoserine + NADP(+) = L-aspartate 4-semialdehyde + NADPH + H(+). It carries out the reaction L-homoserine + NAD(+) = L-aspartate 4-semialdehyde + NADH + H(+). It participates in amino-acid biosynthesis; L-methionine biosynthesis via de novo pathway; L-homoserine from L-aspartate: step 3/3. The protein operates within amino-acid biosynthesis; L-threonine biosynthesis; L-threonine from L-aspartate: step 3/5. Its function is as follows. Catalyzes the conversion of L-aspartate-beta-semialdehyde (L-Asa) to L-homoserine (L-Hse), the third step in the biosynthesis of amino acids that derive from aspartate (the aspartate family of amino acids), including methioinine and threonine, the latter of which is a precursor to isoleucine; production of homoserine leads to a branch-point in the pathway as it can either be O-phosphorylated for processing to threonine, or O-acylated for processing to methionine. In Paracoccidioides brasiliensis (strain Pb18), this protein is Homoserine dehydrogenase.